The chain runs to 360 residues: Photosystem II protein D1 (360 aa).

The next 3 helical transmembrane spans lie at 29 to 46 (YIGWFGVLMIPTLLAATA), 118 to 133 (HFLLGCACYLGRQWEL), and 142 to 156 (WICVAYSAPLASATA). Residue H118 coordinates chlorophyll a. Y126 contacts pheophytin a. Residues D170 and E189 each contribute to the [CaMn4O5] cluster site. A helical membrane pass occupies residues 197-218 (FHMLGVAGVFGGSLFSAMHGSL). H198 is a chlorophyll a binding site. A quinone-binding positions include H215 and 264–265 (SF). H215 is a Fe cation binding site. A Fe cation-binding site is contributed by H272. The chain crosses the membrane as a helical span at residues 274–288 (FLAAWPVVGIWFTAL). Positions 332, 333, 342, and 344 each coordinate [CaMn4O5] cluster. Residues 345–360 (AGEVAPVALTAPAING) constitute a propeptide that is removed on maturation.

The protein belongs to the reaction center PufL/M/PsbA/D family. As to quaternary structure, PSII is composed of 1 copy each of membrane proteins PsbA, PsbB, PsbC, PsbD, PsbE, PsbF, PsbH, PsbI, PsbJ, PsbK, PsbL, PsbM, PsbT, PsbX, PsbY, PsbZ, Psb30/Ycf12, peripheral proteins PsbO, CyanoQ (PsbQ), PsbU, PsbV and a large number of cofactors. It forms dimeric complexes. The D1/D2 heterodimer binds P680, chlorophylls that are the primary electron donor of PSII, and subsequent electron acceptors. It shares a non-heme iron and each subunit binds pheophytin, quinone, additional chlorophylls, carotenoids and lipids. D1 provides most of the ligands for the Mn4-Ca-O5 cluster of the oxygen-evolving complex (OEC). There is also a Cl(-1) ion associated with D1 and D2, which is required for oxygen evolution. The PSII complex binds additional chlorophylls, carotenoids and specific lipids. is required as a cofactor. Post-translationally, tyr-161 forms a radical intermediate that is referred to as redox-active TyrZ, YZ or Y-Z. In terms of processing, C-terminally processed by CtpA; processing is essential to allow assembly of the oxygen-evolving complex and thus photosynthetic growth.

The protein localises to the cellular thylakoid membrane. It catalyses the reaction 2 a plastoquinone + 4 hnu + 2 H2O = 2 a plastoquinol + O2. Photosystem II (PSII) is a light-driven water:plastoquinone oxidoreductase that uses light energy to abstract electrons from H(2)O, generating O(2) and a proton gradient subsequently used for ATP formation. It consists of a core antenna complex that captures photons, and an electron transfer chain that converts photonic excitation into a charge separation. The D1/D2 (PsbA/PsbD) reaction center heterodimer binds P680, the primary electron donor of PSII as well as several subsequent electron acceptors. The chain is Photosystem II protein D1 from Microchaete diplosiphon (Fremyella diplosiphon).